Here is a 198-residue protein sequence, read N- to C-terminus: Probable chemoreceptor glutamine deamidase CheD (198 aa).

It belongs to the CheD family.

The catalysed reaction is L-glutaminyl-[protein] + H2O = L-glutamyl-[protein] + NH4(+). Functionally, probably deamidates glutamine residues to glutamate on methyl-accepting chemotaxis receptors (MCPs), playing an important role in chemotaxis. The polypeptide is Probable chemoreceptor glutamine deamidase CheD (Stenotrophomonas maltophilia (strain R551-3)).